Here is a 142-residue protein sequence, read N- to C-terminus: Large ribosomal subunit protein uL13 (142 aa).

Belongs to the universal ribosomal protein uL13 family. In terms of assembly, part of the 50S ribosomal subunit.

In terms of biological role, this protein is one of the early assembly proteins of the 50S ribosomal subunit, although it is not seen to bind rRNA by itself. It is important during the early stages of 50S assembly. This chain is Large ribosomal subunit protein uL13, found in Buchnera aphidicola subsp. Schizaphis graminum (strain Sg).